The primary structure comprises 357 residues: Peptide chain release factor 1 (357 aa).

An N5-methylglutamine modification is found at glutamine 234.

It belongs to the prokaryotic/mitochondrial release factor family. Post-translationally, methylated by PrmC. Methylation increases the termination efficiency of RF1.

Its subcellular location is the cytoplasm. In terms of biological role, peptide chain release factor 1 directs the termination of translation in response to the peptide chain termination codons UAG and UAA. The chain is Peptide chain release factor 1 from Lactococcus lactis subsp. cremoris (strain MG1363).